Reading from the N-terminus, the 325-residue chain is Aldo-keto reductase family 1 member A1 (325 aa).

Ala-2 is modified (N-acetylalanine). Ser-4 is subject to Phosphoserine. Residues 11–20, Thr-21, and Trp-22 contribute to the NADP(+) site; that span reads GQKMPLIGLG. At Ser-38 the chain carries Phosphoserine. Asp-45 is a binding site for NADP(+). The active-site Proton donor is Tyr-50. At Lys-127 the chain carries N6-acetyllysine; alternate. Residue Lys-127 is modified to N6-succinyllysine; alternate. Residues Ser-162, Asn-163, Ser-211, Leu-213, Ser-215, Ser-216, Lys-263, Ser-264, Val-265, Thr-266, Arg-269, and Asn-273 each contribute to the NADP(+) site. Ser-211 is modified (phosphoserine).

It belongs to the aldo/keto reductase family. In terms of assembly, monomer.

Its subcellular location is the cytoplasm. The protein resides in the cytosol. The protein localises to the apical cell membrane. It catalyses the reaction a primary alcohol + NADP(+) = an aldehyde + NADPH + H(+). The enzyme catalyses L-gulonate + NADP(+) = aldehydo-D-glucuronate + NADPH + H(+). The catalysed reaction is L-gulono-1,4-lactone + NADP(+) = D-glucurono-3,6-lactone + NADPH + H(+). It carries out the reaction allyl alcohol + NADP(+) = acrolein + NADPH + H(+). It catalyses the reaction glycerol + NADP(+) = D-glyceraldehyde + NADPH + H(+). The enzyme catalyses glycerol + NADP(+) = L-glyceraldehyde + NADPH + H(+). The catalysed reaction is hydroxyacetone + NADP(+) = methylglyoxal + NADPH + H(+). It carries out the reaction 3-deoxyfructose + NADP(+) = 3-deoxyglucosone + NADPH + H(+). It catalyses the reaction (R)-mevalonate + NADP(+) = (R)-mevaldate + NADPH + H(+). The enzyme catalyses pyridine 3-methanol + NADP(+) = pyridine-3-carbaldehyde + NADPH + H(+). The catalysed reaction is S-nitroso-CoA + NADPH + H(+) = sulfinamide-CoA + NADP(+). It carries out the reaction S-nitrosoglutathione + NADPH + H(+) = S-(hydroxysulfenamide)glutathione + NADP(+). Catalyzes the NADPH-dependent reduction of a wide variety of carbonyl-containing compounds to their corresponding alcohols. Displays enzymatic activity towards endogenous metabolites such as aromatic and aliphatic aldehydes, ketones, monosaccharides and bile acids, with a preference for negatively charged substrates, such as glucuronate and succinic semialdehyde. Plays an important role in ascorbic acid biosynthesis by catalyzing the reduction of D-glucuronic acid and D-glucurono-gamma-lactone. Functions as a detoxifiying enzyme by reducing a range of toxic aldehydes. Reduces methylglyoxal and 3-deoxyglucosone, which are present at elevated levels under hyperglycemic conditions and are cytotoxic. Involved also in the detoxification of lipid-derived aldehydes like acrolein. Plays a role in the activation of procarcinogens, such as polycyclic aromatic hydrocarbon trans-dihydrodiols, and in the metabolism of various xenobiotics and drugs. Also acts as an inhibitor of protein S-nitrosylation by mediating degradation of S-nitroso-coenzyme A (S-nitroso-CoA), a cofactor required to S-nitrosylate proteins. S-nitroso-CoA reductase activity is involved in reprogramming intermediary metabolism in renal proximal tubules, notably by inhibiting protein S-nitrosylation of isoform 2 of PKM (PKM2). Also acts as a S-nitroso-glutathione reductase by catalyzing the NADPH-dependent reduction of S-nitrosoglutathione. Displays no reductase activity towards retinoids. The chain is Aldo-keto reductase family 1 member A1 from Bos taurus (Bovine).